We begin with the raw amino-acid sequence, 495 residues long: Probable plastidic glucose transporter 3 (495 aa).

12 helical membrane passes run 55 to 75 (LPHV…LGVV), 97 to 117 (LVVS…GLVA), 131 to 151 (LPMI…GMLL), 154 to 174 (FLVG…VTEV), 183 to 203 (YGSS…FAGI), 214 to 234 (ICFW…ELCV), 294 to 314 (VVFI…NAVF), 330 to 350 (SANI…VVLM), 357 to 377 (VLLI…AIAY), 384 to 404 (FGTL…FATG), 425 to 445 (ALAV…LLFL), and 451 to 471 (LGSV…VIFV).

Belongs to the major facilitator superfamily. Sugar transporter (TC 2.A.1.1) family.

It is found in the plastid. The protein localises to the chloroplast membrane. Functionally, may be involved in the efflux of glucose towards the cytosol. This chain is Probable plastidic glucose transporter 3, found in Arabidopsis thaliana (Mouse-ear cress).